A 446-amino-acid polypeptide reads, in one-letter code: Sulfoquinovose isomerase (446 aa).

Belongs to the SqvD family.

It carries out the reaction 6-sulfo-beta-D-quinovose = 6-deoxy-6-sulfo-D-fructose. Part of the sulfo-TAL (or sulfo-SFT) pathway, a D-sulfoquinovose degradation pathway that produces sulfolactate (SL). Catalyzes the isomerization of sulfoquinovose (SQ) to 6-deoxy-6-sulfo-D-fructose (SF). The sequence is that of Sulfoquinovose isomerase from Priestia aryabhattai (Bacillus aryabhattai).